We begin with the raw amino-acid sequence, 1557 residues long: DVA-1 polyprotein (1557 aa).

Positions 1–21 are cleaved as a signal peptide; that stretch reads MKSTSFITLLLLSYFIVEAHS. Positions 22–60 are excised as a propeptide; that stretch reads SIFHWDDERLFKHDDTHSWLTDVQKAELETLKHQPIQLR. Residue Asn-997 is glycosylated (N-linked (GlcNAc...) asparagine).

Belongs to the NPA family. Nematode polyprotein allergens (NPAs) are synthesized as large polypeptides that are subsequently proteolytically cleaved to active polypeptide units.

Has high binding affinity for fatty acids and retinoids. This Dictyocaulus viviparus (Bovine lungworm) protein is DVA-1 polyprotein (DVA-1).